We begin with the raw amino-acid sequence, 305 residues long: Aurasperone B biosynthesis cluster protein A (305 aa).

A signal peptide spans 1–26 (MSIFFSIRFWPAAISAAILWLPQVLG). Asn-29, Asn-34, Asn-64, Asn-83, Asn-132, Asn-183, Asn-218, and Asn-288 each carry an N-linked (GlcNAc...) asparagine glycan.

This sequence belongs to the bfoA family.

Part of the gene cluster that mediates the biosynthesis of aurasperone B, a dimeric gamma-naphthopyrone. The first step in the biosynthesis of aurasperone B is the production of gamma-naphthopyrone precursor YWA1 by the non-reducing polyketide synthase albA, via condensation of one acetyl-CoA starter unit with 6 malonyl-CoA units. YWA1 is then methylated by aunE at position C-6 to yield foncesin which is further methylated at position C-8 by aunD to produce fonsecin B. A key enzyme in the biosynthetic pathway is the cytochrome P450 monooxygenase aunB which catalyzes the oxidative dimerization of fonsecin B to aurasperone B. AunB also catalyzes the oxidative dimerization of rubrofusarin B into aurasperone A. This Aspergillus niger (strain ATCC 1015 / CBS 113.46 / FGSC A1144 / LSHB Ac4 / NCTC 3858a / NRRL 328 / USDA 3528.7) protein is Aurasperone B biosynthesis cluster protein A.